Reading from the N-terminus, the 190-residue chain is Probable nicotinate-nucleotide adenylyltransferase (190 aa).

The protein belongs to the NadD family.

It catalyses the reaction nicotinate beta-D-ribonucleotide + ATP + H(+) = deamido-NAD(+) + diphosphate. It functions in the pathway cofactor biosynthesis; NAD(+) biosynthesis; deamido-NAD(+) from nicotinate D-ribonucleotide: step 1/1. Catalyzes the reversible adenylation of nicotinate mononucleotide (NaMN) to nicotinic acid adenine dinucleotide (NaAD). This chain is Probable nicotinate-nucleotide adenylyltransferase, found in Borrelia hermsii (strain HS1 / DAH).